The sequence spans 555 residues: Aerobic glycerol-3-phosphate dehydrogenase (555 aa).

24–52 (DLFIIGGGITGAGTALDAASRGMKVALSE) contributes to the FAD binding site.

It belongs to the FAD-dependent glycerol-3-phosphate dehydrogenase family. It depends on FAD as a cofactor.

It is found in the cytoplasm. It carries out the reaction a quinone + sn-glycerol 3-phosphate = dihydroxyacetone phosphate + a quinol. It functions in the pathway polyol metabolism; glycerol degradation via glycerol kinase pathway; glycerone phosphate from sn-glycerol 3-phosphate (aerobic route): step 1/1. The protein is Aerobic glycerol-3-phosphate dehydrogenase (glpD) of Bacillus subtilis (strain 168).